The following is a 419-amino-acid chain: MFTSVAQANAAVIEQIRRARPHWLDVQPASSLISELNEGKTLLHAGPPMRWQEMTGPMKGACVGACLFEGWAKDEAQALAILEQGEVNFIPCHHVNAVGPMGGITSASMPMLVVENVTDGNRAYCNLNEGIGKVMRFGAYGEDVLTRHRWMRDVLMPVLSAALGRMERGIDLTAMMAQGITMGDEFHQRNIASSALLMRALAPQIARLDHDKQHIAEVMDFLSVTDQFFLNLAMAYCKAAMDAGAMIRAGSIVTAMTRNGNMFGIRVSGLGERWFTAPVNTPQGLFFTGFSQEQANPDMGDSAITETFGIGGAAMIAAPGVTRFVGAGGMEAARAVSEEMAEIYLERNMQLQIPSWDFQGACLGLDIRRVVETGITPLINTGIAHKEAGIGQIGAGTVRAPLACFEQALEALAESMGIG.

This sequence belongs to the AllG family. The OXTCase is composed of 3 subunits, AllF, AllG and AllH. Mg(2+) serves as cofactor.

The enzyme catalyses oxamate + carbamoyl phosphate = N-carbamoyl-2-oxoglycine + phosphate. Its pathway is nitrogen metabolism; (S)-allantoin degradation. In terms of biological role, component of a carbamoyltransferase involved in the anaerobic nitrogen utilization via the assimilation of allantoin. Catalyzes the conversion of oxalurate (N-carbamoyl-2-oxoglycine) to oxamate and carbamoyl phosphate. This chain is Oxamate carbamoyltransferase subunit AllG, found in Escherichia coli (strain K12).